A 184-amino-acid polypeptide reads, in one-letter code: ATP synthase subunit b 1 (184 aa).

Residues 4–24 (LSILAVLAASPAMAATGPFLS) traverse the membrane as a helical segment.

Belongs to the ATPase B chain family. F-type ATPases have 2 components, F(1) - the catalytic core - and F(0) - the membrane proton channel. F(1) has five subunits: alpha(3), beta(3), gamma(1), delta(1), epsilon(1). F(0) has three main subunits: a(1), b(2) and c(10-14). The alpha and beta chains form an alternating ring which encloses part of the gamma chain. F(1) is attached to F(0) by a central stalk formed by the gamma and epsilon chains, while a peripheral stalk is formed by the delta and b chains.

It is found in the cell inner membrane. F(1)F(0) ATP synthase produces ATP from ADP in the presence of a proton or sodium gradient. F-type ATPases consist of two structural domains, F(1) containing the extramembraneous catalytic core and F(0) containing the membrane proton channel, linked together by a central stalk and a peripheral stalk. During catalysis, ATP synthesis in the catalytic domain of F(1) is coupled via a rotary mechanism of the central stalk subunits to proton translocation. Functionally, component of the F(0) channel, it forms part of the peripheral stalk, linking F(1) to F(0). The protein is ATP synthase subunit b 1 of Cereibacter sphaeroides (strain ATCC 17023 / DSM 158 / JCM 6121 / CCUG 31486 / LMG 2827 / NBRC 12203 / NCIMB 8253 / ATH 2.4.1.) (Rhodobacter sphaeroides).